We begin with the raw amino-acid sequence, 361 residues long: Peptide chain release factor 1 (361 aa).

Gln237 is modified (N5-methylglutamine).

This sequence belongs to the prokaryotic/mitochondrial release factor family. Methylated by PrmC. Methylation increases the termination efficiency of RF1.

Its subcellular location is the cytoplasm. Peptide chain release factor 1 directs the termination of translation in response to the peptide chain termination codons UAG and UAA. This chain is Peptide chain release factor 1, found in Alcanivorax borkumensis (strain ATCC 700651 / DSM 11573 / NCIMB 13689 / SK2).